The primary structure comprises 300 residues: Ribosomal RNA small subunit methyltransferase H (300 aa).

S-adenosyl-L-methionine is bound by residues glycine 46 to histidine 48, aspartate 65, phenylalanine 92, aspartate 107, and glutamine 114.

It belongs to the methyltransferase superfamily. RsmH family.

It is found in the cytoplasm. The enzyme catalyses cytidine(1402) in 16S rRNA + S-adenosyl-L-methionine = N(4)-methylcytidine(1402) in 16S rRNA + S-adenosyl-L-homocysteine + H(+). Its function is as follows. Specifically methylates the N4 position of cytidine in position 1402 (C1402) of 16S rRNA. The sequence is that of Ribosomal RNA small subunit methyltransferase H from Prochlorococcus marinus (strain AS9601).